A 181-amino-acid polypeptide reads, in one-letter code: Adenine phosphoribosyltransferase (181 aa).

It belongs to the purine/pyrimidine phosphoribosyltransferase family. Homodimer.

It localises to the cytoplasm. The catalysed reaction is AMP + diphosphate = 5-phospho-alpha-D-ribose 1-diphosphate + adenine. Its pathway is purine metabolism; AMP biosynthesis via salvage pathway; AMP from adenine: step 1/1. Functionally, catalyzes a salvage reaction resulting in the formation of AMP, that is energically less costly than de novo synthesis. The protein is Adenine phosphoribosyltransferase of Rhodopseudomonas palustris (strain HaA2).